The primary structure comprises 607 residues: UPF0329 protein ECU06_1610 (607 aa).

2 disordered regions span residues 312–410 (VHEV…RSKG) and 531–570 (TSSE…PPGV). Residues 313–347 (HEVKERESEEKRREEESLRNAEELLRMEEREKGEG) are compositionally biased toward basic and acidic residues. A compositionally biased stretch (basic residues) spans 353–364 (KGKKKRGKKGAG). Basic and acidic residues predominate over residues 365 to 374 (KAKEESKEED). Acidic residues predominate over residues 375–393 (RGEEEEESVEAEVPVEEMA). Positions 531-543 (TSSEKTGKGSSPS) are enriched in polar residues. Acidic residues predominate over residues 549 to 558 (DVDEIEEDGS).

It belongs to the UPF0329 family.

The polypeptide is UPF0329 protein ECU06_1610 (Encephalitozoon cuniculi (strain GB-M1) (Microsporidian parasite)).